The following is a 124-amino-acid chain: Small ribosomal subunit protein uS12 (124 aa).

The interval 1 to 25 (MPTFNQLVRNGRKPPRWKTSSPALE) is disordered. 3-methylthioaspartic acid is present on D89. The tract at residues 104-124 (TAGVANRKQSRSKYGAKRPKS) is disordered. A compositionally biased stretch (basic residues) spans 111 to 124 (KQSRSKYGAKRPKS).

Belongs to the universal ribosomal protein uS12 family. As to quaternary structure, part of the 30S ribosomal subunit. Contacts proteins S8 and S17. May interact with IF1 in the 30S initiation complex.

Functionally, with S4 and S5 plays an important role in translational accuracy. Interacts with and stabilizes bases of the 16S rRNA that are involved in tRNA selection in the A site and with the mRNA backbone. Located at the interface of the 30S and 50S subunits, it traverses the body of the 30S subunit contacting proteins on the other side and probably holding the rRNA structure together. The combined cluster of proteins S8, S12 and S17 appears to hold together the shoulder and platform of the 30S subunit. The polypeptide is Small ribosomal subunit protein uS12 (Solibacter usitatus (strain Ellin6076)).